The chain runs to 193 residues: Segregation and condensation protein B (193 aa).

The protein belongs to the ScpB family. Homodimer. Homodimerization may be required to stabilize the binding of ScpA to the Smc head domains. Component of a cohesin-like complex composed of ScpA, ScpB and the Smc homodimer, in which ScpA and ScpB bind to the head domain of Smc. The presence of the three proteins is required for the association of the complex with DNA.

The protein localises to the cytoplasm. Functionally, participates in chromosomal partition during cell division. May act via the formation of a condensin-like complex containing Smc and ScpA that pull DNA away from mid-cell into both cell halves. This chain is Segregation and condensation protein B, found in Streptococcus thermophilus (strain CNRZ 1066).